We begin with the raw amino-acid sequence, 344 residues long: Geranylgeranyl transferase type-2 subunit alpha (344 aa).

PFTA repeat units follow at residues 44–78 (YSEG…NDVF), 89–123 (LLDN…NAPY), 125–159 (NWNY…QIER), 165–199 (LAKK…TILN), 214–248 (ILEQ…HCNP), and 266–293 (YLQK…SLVN).

It belongs to the protein prenyltransferase subunit alpha family. Heterodimer of an alpha and a beta subunit.

The catalysed reaction is geranylgeranyl diphosphate + L-cysteinyl-[protein] = S-geranylgeranyl-L-cysteinyl-[protein] + diphosphate. Functionally, catalyzes the transfer of a geranyl-geranyl moiety from geranyl-geranyl pyrophosphate to proteins having the C-terminal-XCC or -XCXC, where both cysteines may become modified. The polypeptide is Geranylgeranyl transferase type-2 subunit alpha (bet4) (Schizosaccharomyces pombe (strain 972 / ATCC 24843) (Fission yeast)).